The chain runs to 289 residues: Protein shisa-2 homolog (289 aa).

An N-terminal signal peptide occupies residues 1-27 (MWAGCHPDAASLLRLLLAALLAAGALA). The Extracellular segment spans residues 28–104 (SGEYCHGWLD…RADKDGPDGS (77 aa)). Residues 81–102 (GCDNDRQQGAGEPGRADKDGPD) form a disordered region. A helical transmembrane segment spans residues 105–125 (AVPIYVPFLIVGSVFVAFIVL). The Cytoplasmic segment spans residues 126-289 (GSLVAACCCR…EQKMYPAVTV (164 aa)). The segment at 162–198 (PSASTSRGSSSRQSSTAASSSSSANSGARAPPTRSQT) is disordered. The segment covering 163–191 (SASTSRGSSSRQSSTAASSSSSANSGARA) has biased composition (low complexity).

Belongs to the shisa family.

The protein resides in the endoplasmic reticulum membrane. Functionally, plays an essential role in the maturation of presomitic mesoderm cells by individual attenuation of both FGF and WNT signaling. In Bos taurus (Bovine), this protein is Protein shisa-2 homolog (SHISA2).